Here is a 300-residue protein sequence, read N- to C-terminus: Free fatty acid receptor 1 (300 aa).

Topologically, residues 1–8 (MALSPQLF) are extracellular. The helical transmembrane segment at 9-31 (FALYVSAFALGFPLNLLAIRGAV) threads the bilayer. At 32–41 (ARARLRLTPN) the chain is on the cytoplasmic side. The helical transmembrane segment at 42 to 64 (LVYTLHLACSDLLLAITLPVKAV) threads the bilayer. The Extracellular portion of the chain corresponds to 65-79 (EALASGAWPLPLPLC). C79 and C170 form a disulfide bridge. Residues 80–101 (PVFVLVHFAPLYAGGGFLAALS) form a helical membrane-spanning segment. The Cytoplasmic portion of the chain corresponds to 102 to 121 (AGRYLGAAFPFGYQAVRRPR). The chain crosses the membrane as a helical span at residues 122–142 (YSWGVCVAIWALVLCHMGLVL). Topologically, residues 143–178 (GLEAPGGWLNTTSSSLGINTPVNGSPVCLEAWDPNS) are extracellular. A glycan (N-linked (GlcNAc...) asparagine) is linked at N152. Residues 179 to 200 (ARPARLSFSILLFFVPLVITAF) traverse the membrane as a helical segment. Topologically, residues 201 to 223 (CYVGCLRALAHSGLSHKRKLRAA) are cytoplasmic. A helical membrane pass occupies residues 224 to 248 (WAAGGAFLTLLLCLGPYNASNVASF). The Extracellular portion of the chain corresponds to 249-256 (VNPDLGGS). The chain crosses the membrane as a helical span at residues 257–279 (WRKLGLITGSWSVVLNPLVTGYL). Residues 280-300 (GASPGRGTVCTTRTQGGTIQK) are Cytoplasmic-facing.

It belongs to the G-protein coupled receptor 1 family.

It localises to the cell membrane. Its function is as follows. G-protein coupled receptor for medium and long chain saturated and unsaturated fatty acids that plays an important role in glucose homeostasis. Fatty acid binding increases glucose-stimulated insulin secretion, and may also enhance the secretion of glucagon-like peptide 1 (GLP-1). May also play a role in bone homeostasis; receptor signaling activates pathways that inhibit osteoclast differentiation. Ligand binding leads to a conformation change that triggers signaling via G-proteins that activate phospholipase C, leading to an increase of the intracellular calcium concentration. Seems to act through a G(q) and G(i)-mediated pathway. Mediates the anti-inflammatory effects of omega-3 polyunsaturated fatty acids (PUFAs) via inhibition of NLRP3 inflammasome activation. In Mesocricetus auratus (Golden hamster), this protein is Free fatty acid receptor 1 (FFAR1).